Reading from the N-terminus, the 329-residue chain is Holliday junction branch migration complex subunit RuvB (329 aa).

The interval 1–180 (MKNILQSTEC…FGIPIHLEFY (180 aa)) is large ATPase domain (RuvB-L). Residues Ile-19, Arg-20, Gly-61, Lys-64, Thr-65, Thr-66, 127 to 129 (EDF), Arg-170, Tyr-180, and Arg-217 each bind ATP. Thr-65 provides a ligand contact to Mg(2+). The segment at 181–252 (STEELIKVIQ…FADKALLRLG (72 aa)) is small ATPAse domain (RuvB-S). Residues 255 to 329 (KLGLDRQDIQ…ISYLKEQSYI (75 aa)) form a head domain (RuvB-H) region. Positions 308 and 313 each coordinate DNA.

Belongs to the RuvB family. Homohexamer. Forms an RuvA(8)-RuvB(12)-Holliday junction (HJ) complex. HJ DNA is sandwiched between 2 RuvA tetramers; dsDNA enters through RuvA and exits via RuvB. An RuvB hexamer assembles on each DNA strand where it exits the tetramer. Each RuvB hexamer is contacted by two RuvA subunits (via domain III) on 2 adjacent RuvB subunits; this complex drives branch migration. In the full resolvosome a probable DNA-RuvA(4)-RuvB(12)-RuvC(2) complex forms which resolves the HJ.

It localises to the cytoplasm. It catalyses the reaction ATP + H2O = ADP + phosphate + H(+). The RuvA-RuvB-RuvC complex processes Holliday junction (HJ) DNA during genetic recombination and DNA repair, while the RuvA-RuvB complex plays an important role in the rescue of blocked DNA replication forks via replication fork reversal (RFR). RuvA specifically binds to HJ cruciform DNA, conferring on it an open structure. The RuvB hexamer acts as an ATP-dependent pump, pulling dsDNA into and through the RuvAB complex. RuvB forms 2 homohexamers on either side of HJ DNA bound by 1 or 2 RuvA tetramers; 4 subunits per hexamer contact DNA at a time. Coordinated motions by a converter formed by DNA-disengaged RuvB subunits stimulates ATP hydrolysis and nucleotide exchange. Immobilization of the converter enables RuvB to convert the ATP-contained energy into a lever motion, pulling 2 nucleotides of DNA out of the RuvA tetramer per ATP hydrolyzed, thus driving DNA branch migration. The RuvB motors rotate together with the DNA substrate, which together with the progressing nucleotide cycle form the mechanistic basis for DNA recombination by continuous HJ branch migration. Branch migration allows RuvC to scan DNA until it finds its consensus sequence, where it cleaves and resolves cruciform DNA. The polypeptide is Holliday junction branch migration complex subunit RuvB (Ehrlichia canis (strain Jake)).